Here is a 363-residue protein sequence, read N- to C-terminus: Transcription factor IIIA (363 aa).

C2H2-type zinc fingers lie at residues 38–62 (FICS…LCKH), 68–92 (FVCD…ILIH), 98–123 (FVCA…ERKH), 130–154 (YVCN…QCQH), 160–184 (FRCT…GKVH), 187–211 (YLCQ…REAH), 215–237 (VTCT…MKTH), 244–269 (YRCP…LSFH), and 275–299 (FVCE…SVVH). The tract at residues 301–363 (PDKKRMKLKV…LAPAALLTVH (63 aa)) is disordered. Low complexity predominate over residues 338–350 (SLPNSTESSSSPE).

Its subcellular location is the nucleus. Functionally, involved in ribosomal large subunit biogenesis. Binds the approximately 50 base pairs internal control region (ICR) of 5S ribosomal RNA genes. It is required for their RNA polymerase III-dependent transcription and may also maintain the transcription of other genes. Also binds the transcribed 5S RNA's. The chain is Transcription factor IIIA (Gtf3a) from Rattus norvegicus (Rat).